Reading from the N-terminus, the 239-residue chain is 6-phosphogluconolactonase (239 aa).

The protein belongs to the glucosamine/galactosamine-6-phosphate isomerase family. 6-phosphogluconolactonase subfamily.

The catalysed reaction is 6-phospho-D-glucono-1,5-lactone + H2O = 6-phospho-D-gluconate + H(+). Its pathway is carbohydrate degradation; pentose phosphate pathway; D-ribulose 5-phosphate from D-glucose 6-phosphate (oxidative stage): step 2/3. Functionally, hydrolysis of 6-phosphogluconolactone to 6-phosphogluconate. The protein is 6-phosphogluconolactonase (pgl) of Xylella fastidiosa (strain 9a5c).